The chain runs to 181 residues: ADP-ribosylation factor 1 (181 aa).

A lipid anchor (N-myristoyl glycine) is attached at Gly-2. GTP-binding positions include Gly-24–Thr-31, Asp-67–Gln-71, and Asn-126–Asp-129.

This sequence belongs to the small GTPase superfamily. Arf family. Seedling shoots.

It localises to the golgi apparatus. The enzyme catalyses GTP + H2O = GDP + phosphate + H(+). Its function is as follows. GTP-binding protein involved in protein trafficking; may modulate vesicle budding and uncoating within the Golgi apparatus. The polypeptide is ADP-ribosylation factor 1 (Oryza sativa subsp. japonica (Rice)).